Here is a 315-residue protein sequence, read N- to C-terminus: Prephenate dehydratase (315 aa).

Residues 7–190 enclose the Prephenate dehydratase domain; it reads VVAYLGPAGT…ARTRFVAVQA (184 aa). The 80-residue stretch at 204 to 283 folds into the ACT domain; that stretch reads SVIFSLPNVP…LVFVGSWPSN (80 aa).

It catalyses the reaction prephenate + H(+) = 3-phenylpyruvate + CO2 + H2O. It functions in the pathway amino-acid biosynthesis; L-phenylalanine biosynthesis; phenylpyruvate from prephenate: step 1/1. In Corynebacterium glutamicum (strain ATCC 13032 / DSM 20300 / JCM 1318 / BCRC 11384 / CCUG 27702 / LMG 3730 / NBRC 12168 / NCIMB 10025 / NRRL B-2784 / 534), this protein is Prephenate dehydratase (pheA).